A 478-amino-acid chain; its full sequence is WD repeat-containing protein AAC3 (478 aa).

Disordered stretches follow at residues 33-53 (HPLF…QQQQ) and 106-140 (SQIH…QYTN). A compositionally biased stretch (low complexity) spans 106–125 (SQIHQQSQQSQLSNNLNSNS). Positions 126-140 (KESTNIPKTNTQYTN) are enriched in polar residues. 7 WD repeats span residues 163 to 202 (GNKK…NSNN), 226 to 268 (GHDG…GTVS), 270 to 307 (NSEN…TLKI), 310 to 349 (FNGE…TTHV), 357 to 396 (GHTA…CVKT), 399 to 438 (KSTF…PIHT), and 440 to 478 (ECSG…GYHS).

This sequence belongs to the THOC3 family.

The sequence is that of WD repeat-containing protein AAC3 (AAC3) from Dictyostelium discoideum (Social amoeba).